A 298-amino-acid polypeptide reads, in one-letter code: S-adenosyl-L-methionine-dependent methyltransferase dpfgK (298 aa).

Belongs to the methyltransferase superfamily.

It functions in the pathway secondary metabolite biosynthesis; terpenoid biosynthesis. Its function is as follows. S-adenosyl-L-methionine-dependent methyltransferase; part of the gene cluster that mediates the biosynthesis of diterpenoid pyrones. The first step of the pathway is the synthesis of the alpha-pyrone moiety by the polyketide synthase dpfgA via condensation of one acetyl-CoA starter unit with 3 malonyl-CoA units and 2 methylations. The alpha-pyrone is then combined with geranylgeranyl pyrophosphate (GGPP) formed by the GGPP synthase dpfgD through the action of the prenyltransferase dpfgC to yield a linear alpha-pyrone diterpenoid. Subsequent steps in the diterpenoid pyrone biosynthetic pathway involve the decalin core formation, which is initiated by the epoxidation of the C10-C11 olefin by the FAD-dependent oxidoreductase dpfgE, and is followed by a cyclization cascade catalyzed by the terpene cyclase dpfgB. The short chain dehydrogenase/reductase dpfgG then oxidizes the 8S hydroxy group to a ketone and the short chain dehydrogenase/reductase dpfgH reduces the ketone to the 8R hydroxy group to yield higginsianin B. Higginsianin B is further methylated by the methyltransferase dpfgI to produce the intermediate named FDDP B. The cytochrome P450 monooxygenase dfgpJ then catalyzes a three-step oxidation at C-27 to generate a carboxylic acid as well as C-26 hydroxylation. Finally, methyltransferase dpfgK methylates the carboxylic acid generated by dpfgJ, yielding the final diterpenoid pyrones from the pathway which were named FDDP D and FDDP E. This is S-adenosyl-L-methionine-dependent methyltransferase dpfgK from Gibberella zeae (strain ATCC MYA-4620 / CBS 123657 / FGSC 9075 / NRRL 31084 / PH-1) (Wheat head blight fungus).